Here is a 257-residue protein sequence, read N- to C-terminus: Homeobox protein ceh-36 (257 aa).

The segment covering 33 to 49 has biased composition (low complexity); the sequence is SATTSSTTMAPMAPNSE. Disordered stretches follow at residues 33–63 and 113–156; these read SATTSSTTMAPMAPNSESGRRAGRRERTSFN and DRNN…GTPE. Positions 55 to 117 form a DNA-binding region, homeobox; that stretch reads GRRERTSFNR…NRRAKDRNNK (63 aa). A compositionally biased stretch (low complexity) spans 123-137; the sequence is HPGSTSSRSSNGSPH.

The protein belongs to the paired homeobox family. Interacts with sox-2. As to expression, expressed in ASE and AWC chemosensory neurons. Expressed left-right asymmetrically in the embryo, in the grandmother cell and the mother cell to the MI pharyngeal motorneuron but in neither analogous precursors of the e3D neuron.

It localises to the nucleus. In terms of biological role, probable transcription factor, acting as a progenitor identity factor regulating the development of lineally-related embryonic cells including glial, excretory and neuronal cells. Mediates chemosensory function of ASE and AWC neurons. In ASE neurons, required to diversify the fate of the ASEL neurons from the ASER neurons. Acts cell-autonomously to establish a neuronal left right asymmetry, possibly promoting asymmetric expression of the helix-loop-helix proteins ngn-1 and hlh-2. In cooperation with the transcription factor sox-2, required for the differentiation of AWC olfactory neurons. May regulate the expression of sox-2 in AWC olfactory neurons. In Caenorhabditis elegans, this protein is Homeobox protein ceh-36.